Reading from the N-terminus, the 512-residue chain is Dihydroniloticin synthase CYP71CD2 (512 aa).

Residues 1–21 traverse the membrane as a helical segment; that stretch reads MNLQLDYFSITSFLVFLVVLF. Asn436 contributes to the heme binding site.

Belongs to the cytochrome P450 family. The cofactor is heme. Mainly expressed in petioles and roots, and, to a lower extent, in leaves.

The protein localises to the membrane. It carries out the reaction tirucalla-7,24-dien-3beta-ol + 2 reduced [NADPH--hemoprotein reductase] + 2 O2 = dihydroniloticin + 2 oxidized [NADPH--hemoprotein reductase] + 2 H2O + 2 H(+). It participates in secondary metabolite biosynthesis; terpenoid biosynthesis. Its function is as follows. Monooxygenase involved in the biosynthesis of limonoids triterpene natural products such as azadirachtin, an antifeedant widely used as bioinsecticide, and possessing many medicinal applications including anti-tumoral, anti-malarial, anti-rheumatic, antibacterial, anti-inflammatory, anti-pyretic and diuretic effects. Catalyzes the conversion of tirucalladienol to dihydroniloticin. The polypeptide is Dihydroniloticin synthase CYP71CD2 (Melia azedarach (Chinaberry tree)).